An 864-amino-acid polypeptide reads, in one-letter code: DNA mismatch repair protein MutS (864 aa).

607 to 614 contacts ATP; that stretch reads GPNMGGKS.

Belongs to the DNA mismatch repair MutS family.

Its function is as follows. This protein is involved in the repair of mismatches in DNA. It is possible that it carries out the mismatch recognition step. This protein has a weak ATPase activity. This is DNA mismatch repair protein MutS from Neisseria meningitidis serogroup C (strain 053442).